The primary structure comprises 427 residues: Gamma-glutamyl phosphate reductase (427 aa).

It belongs to the gamma-glutamyl phosphate reductase family.

The protein resides in the cytoplasm. It catalyses the reaction L-glutamate 5-semialdehyde + phosphate + NADP(+) = L-glutamyl 5-phosphate + NADPH + H(+). It participates in amino-acid biosynthesis; L-proline biosynthesis; L-glutamate 5-semialdehyde from L-glutamate: step 2/2. Catalyzes the NADPH-dependent reduction of L-glutamate 5-phosphate into L-glutamate 5-semialdehyde and phosphate. The product spontaneously undergoes cyclization to form 1-pyrroline-5-carboxylate. The protein is Gamma-glutamyl phosphate reductase of Rhizobium etli (strain ATCC 51251 / DSM 11541 / JCM 21823 / NBRC 15573 / CFN 42).